The chain runs to 99 residues: Malonate decarboxylase acyl carrier protein (99 aa).

S25 carries the post-translational modification O-(phosphoribosyl dephospho-coenzyme A)serine.

It belongs to the MdcC family. Covalently binds the prosthetic group of malonate decarboxylase.

It is found in the cytoplasm. Subunit of malonate decarboxylase, it is an acyl carrier protein to which acetyl and malonyl thioester residues are bound via a 2'-(5''-phosphoribosyl)-3'-dephospho-CoA prosthetic group and turn over during the catalytic mechanism. The protein is Malonate decarboxylase acyl carrier protein of Pseudomonas savastanoi pv. phaseolicola (strain 1448A / Race 6) (Pseudomonas syringae pv. phaseolicola (strain 1448A / Race 6)).